Reading from the N-terminus, the 546-residue chain is Probable protein kinase UbiB (546 aa).

A Protein kinase domain is found at 123-501 (DFDETPLASA…SRRQGQARYL (379 aa)). Residues 129–137 (LASASIAQV) and K152 contribute to the ATP site. The active-site Proton acceptor is the D287. Transmembrane regions (helical) follow at residues 498-517 (ARYL…FLLT) and 522-541 (IEWG…LGWL).

The protein belongs to the ABC1 family. UbiB subfamily.

The protein localises to the cell inner membrane. Its pathway is cofactor biosynthesis; ubiquinone biosynthesis [regulation]. In terms of biological role, is probably a protein kinase regulator of UbiI activity which is involved in aerobic coenzyme Q (ubiquinone) biosynthesis. This Aeromonas hydrophila subsp. hydrophila (strain ATCC 7966 / DSM 30187 / BCRC 13018 / CCUG 14551 / JCM 1027 / KCTC 2358 / NCIMB 9240 / NCTC 8049) protein is Probable protein kinase UbiB.